A 511-amino-acid chain; its full sequence is Maturase K (511 aa).

This sequence belongs to the intron maturase 2 family. MatK subfamily.

The protein localises to the plastid. It localises to the chloroplast. In terms of biological role, usually encoded in the trnK tRNA gene intron. Probably assists in splicing its own and other chloroplast group II introns. This Bromelia plumieri (Karatas) protein is Maturase K.